The sequence spans 1299 residues: DExH-box ATP-dependent RNA helicase DExH6 (1299 aa).

Residues 15 to 82 (PTSVEATRIW…QRRLSIFKSR (68 aa)) enclose the R3H domain. Residues 197-366 (TSAVESNQVI…FGGCPVVRVP (170 aa)) enclose the Helicase ATP-binding domain. Position 210-217 (210-217 (GETGCGKT)) interacts with ATP. A DEIH box motif is present at residues 313–316 (DEIH). In terms of domain architecture, Helicase C-terminal spans 537–711 (LIQQLMRKIC…ELCLQVKILD (175 aa)). 2 disordered regions span residues 987-1039 (PTGS…MMSS) and 1175-1299 (IPRQ…AEQK). The segment covering 992–1006 (DSDDSNEEEEDDEEV) has biased composition (acidic residues). A compositionally biased stretch (low complexity) spans 1007–1020 (AANTNEEVAANTNE). Residues 1023–1032 (MDIHKEESRR) show a composition bias toward basic and acidic residues. 3 stretches are compositionally biased toward polar residues: residues 1176-1193 (PRQQ…NNTD), 1204-1214 (NPTNRINQPEA), and 1239-1251 (PSDQ…QHNT). A Bipartite nuclear localization signal motif is present at residues 1182–1200 (KQRNPKATNNTDSGKKKEK). The short motif at 1267–1283 (KKTKTRSGNNSDSGKKK) is the Bipartite nuclear localization signal element. Residues 1279–1299 (SGKKKEQYIPKRQREDKAEQK) are compositionally biased toward basic and acidic residues.

It belongs to the DExH box helicase family. As to expression, specifically expressed in the tapetum and vascular tissues.

The protein resides in the nucleus. It catalyses the reaction ATP + H2O = ADP + phosphate + H(+). In terms of biological role, may function as an ATP-dependent RNA/DNA helicase. The polypeptide is DExH-box ATP-dependent RNA helicase DExH6 (Arabidopsis thaliana (Mouse-ear cress)).